Reading from the N-terminus, the 103-residue chain is Large ribosomal subunit protein bL21 (103 aa).

It belongs to the bacterial ribosomal protein bL21 family. In terms of assembly, part of the 50S ribosomal subunit. Contacts protein L20.

This protein binds to 23S rRNA in the presence of protein L20. In Delftia acidovorans (strain DSM 14801 / SPH-1), this protein is Large ribosomal subunit protein bL21.